We begin with the raw amino-acid sequence, 125 residues long: Large ribosomal subunit protein bL12 (125 aa).

The protein belongs to the bacterial ribosomal protein bL12 family. Homodimer. Part of the ribosomal stalk of the 50S ribosomal subunit. Forms a multimeric L10(L12)X complex, where L10 forms an elongated spine to which 2 to 4 L12 dimers bind in a sequential fashion. Binds GTP-bound translation factors.

Forms part of the ribosomal stalk which helps the ribosome interact with GTP-bound translation factors. Is thus essential for accurate translation. The chain is Large ribosomal subunit protein bL12 from Thermoanaerobacter sp. (strain X514).